A 597-amino-acid polypeptide reads, in one-letter code: Alpha-1,2-mannosyltransferase MNN2 (597 aa).

The Cytoplasmic segment spans residues 1–12 (MLLTKRFSKLFK). The helical; Signal-anchor for type II membrane protein transmembrane segment at 13-28 (LTFIVLILCGLFVITN) threads the bilayer. Over 29-597 (KYMDENTSVK…STHDKAIAGK (569 aa)) the chain is Extracellular. Residues asparagine 34, asparagine 363, and asparagine 473 are each glycosylated (N-linked (GlcNAc...) asparagine).

Belongs to the MNN1/MNT family. In terms of assembly, interacts with SVP26.

It localises to the golgi apparatus membrane. Its pathway is protein modification; protein glycosylation. Its function is as follows. Alpha-1,2-mannosyltransferase, responsible for addition of the first alpha-1,2-linked mannose to form the branches on the mannan backbone of oligosaccharides. The chain is Alpha-1,2-mannosyltransferase MNN2 (MNN2) from Saccharomyces cerevisiae (strain ATCC 204508 / S288c) (Baker's yeast).